The chain runs to 32 residues: Beta-hexosaminidase (32 aa).

The 32-residue stretch at 1 to 32 (GKSSSRPLGDATLGDLDFDIEVTQDYWDDLAR) folds into the GH18 domain. Catalysis depends on E21, which acts as the Proton donor.

Belongs to the glycosyl hydrolase 18 family. Chitinase class II subfamily.

The enzyme catalyses Hydrolysis of terminal non-reducing N-acetyl-D-hexosamine residues in N-acetyl-beta-D-hexosaminides.. Its activity is regulated as follows. Activity is decreased by HgCl(2) and maltose. Activity is stimulated by Na(2)SeO(4), BaCl(2), MgCl(2), chondroitin 6-sulfate and phenylmethylsulfonyl fluoride. Its function is as follows. Preferentially hydrolyzes pNP-GlcNAc, hydrolyzes pNP-GalNAc to a lesser extent. This is Beta-hexosaminidase from Palythoa caribaeorum (White encrusting zoanthid coral).